The sequence spans 228 residues: Ribose-5-phosphate isomerase A (228 aa).

Substrate contacts are provided by residues 29–32 (TGST), 85–88 (DGAD), and 98–101 (KGGG). The active-site Proton acceptor is the glutamate 107. A substrate-binding site is contributed by lysine 125.

Belongs to the ribose 5-phosphate isomerase family. In terms of assembly, homodimer.

It carries out the reaction aldehydo-D-ribose 5-phosphate = D-ribulose 5-phosphate. The protein operates within carbohydrate degradation; pentose phosphate pathway; D-ribose 5-phosphate from D-ribulose 5-phosphate (non-oxidative stage): step 1/1. Its function is as follows. Catalyzes the reversible conversion of ribose-5-phosphate to ribulose 5-phosphate. This Staphylococcus aureus (strain MRSA252) protein is Ribose-5-phosphate isomerase A.